A 180-amino-acid polypeptide reads, in one-letter code: Membrane protein UL121 (180 aa).

An N-terminal signal peptide occupies residues 1–27; that stretch reads MWGCGWSRILVLLLLMCMALMARGTYG. The chain crosses the membrane as a helical span at residues 143-163; it reads LGLLYAVCLILSFSIVTAALW.

This sequence belongs to the HHV-5 UL121 protein family.

The protein resides in the host membrane. In Human cytomegalovirus (strain Merlin) (HHV-5), this protein is Membrane protein UL121 (UL121).